The following is a 376-amino-acid chain: Chaperone protein DnaJ (376 aa).

One can recognise a J domain in the interval 5–70 (DYYEILGVSK…QKRAAYDQYG (66 aa)). The segment at 131-209 (GVTKEIRIPT…CHGHGRVERS (79 aa)) adopts a CR-type zinc-finger fold. Positions 144, 147, 161, 164, 183, 186, 197, and 200 each coordinate Zn(2+). CXXCXGXG motif repeat units lie at residues 144-151 (CDVCHGSG), 161-168 (CPTCHGSG), 183-190 (CPHCQGRG), and 197-204 (CNKCHGHG).

It belongs to the DnaJ family. As to quaternary structure, homodimer. It depends on Zn(2+) as a cofactor.

The protein resides in the cytoplasm. Participates actively in the response to hyperosmotic and heat shock by preventing the aggregation of stress-denatured proteins and by disaggregating proteins, also in an autonomous, DnaK-independent fashion. Unfolded proteins bind initially to DnaJ; upon interaction with the DnaJ-bound protein, DnaK hydrolyzes its bound ATP, resulting in the formation of a stable complex. GrpE releases ADP from DnaK; ATP binding to DnaK triggers the release of the substrate protein, thus completing the reaction cycle. Several rounds of ATP-dependent interactions between DnaJ, DnaK and GrpE are required for fully efficient folding. Also involved, together with DnaK and GrpE, in the DNA replication of plasmids through activation of initiation proteins. The chain is Chaperone protein DnaJ from Shigella flexneri.